We begin with the raw amino-acid sequence, 220 residues long: Protein-L-isoaspartate O-methyltransferase (220 aa).

Residue Ser68 is part of the active site.

Belongs to the methyltransferase superfamily. L-isoaspartyl/D-aspartyl protein methyltransferase family.

It is found in the cytoplasm. It carries out the reaction [protein]-L-isoaspartate + S-adenosyl-L-methionine = [protein]-L-isoaspartate alpha-methyl ester + S-adenosyl-L-homocysteine. Its function is as follows. Catalyzes the methyl esterification of L-isoaspartyl residues in peptides and proteins that result from spontaneous decomposition of normal L-aspartyl and L-asparaginyl residues. It plays a role in the repair and/or degradation of damaged proteins. This Dictyoglomus thermophilum (strain ATCC 35947 / DSM 3960 / H-6-12) protein is Protein-L-isoaspartate O-methyltransferase.